The primary structure comprises 63 residues: Large ribosomal subunit protein uL29 (63 aa).

This sequence belongs to the universal ribosomal protein uL29 family.

This Pseudoalteromonas atlantica (strain T6c / ATCC BAA-1087) protein is Large ribosomal subunit protein uL29.